A 350-amino-acid polypeptide reads, in one-letter code: Probable aldo-keto reductase 1 (350 aa).

Y67 functions as the Proton donor in the catalytic mechanism. Residue H135 coordinates substrate. NADP(+) is bound at residue 214-224; sequence SPLGKGFFSSG.

Belongs to the aldo/keto reductase family.

This is Probable aldo-keto reductase 1 from Oryza sativa subsp. indica (Rice).